Consider the following 179-residue polypeptide: Large ribosomal subunit protein uL6 (179 aa).

The protein belongs to the universal ribosomal protein uL6 family. As to quaternary structure, part of the 50S ribosomal subunit.

Functionally, this protein binds to the 23S rRNA, and is important in its secondary structure. It is located near the subunit interface in the base of the L7/L12 stalk, and near the tRNA binding site of the peptidyltransferase center. In Legionella pneumophila (strain Paris), this protein is Large ribosomal subunit protein uL6.